A 793-amino-acid chain; its full sequence is Kinesin-like protein KIF3C (793 aa).

A Kinesin motor domain is found at 10 to 365 (ALKVVARCRP…LRFANRAKNI (356 aa)). 97–104 (GQTGTGKT) serves as a coordination point for ATP. Disordered regions lie at residues 251–288 (ERQN…ERPK), 395–423 (EKRG…GYPE), and 756–793 (KVRK…ADHE). Residues 270-284 (GGSGGGGGSGGGAGG) show a composition bias toward gly residues. Residues 376–630 (KDTLLREFQE…QNEQTRELKL (255 aa)) are a coiled coil. Residues 399–413 (MLGKRPRRKSSRGKK) show a composition bias toward basic residues. Residues 631 to 793 (KYLIIENFIP…LRPATVADHE (163 aa)) are globular.

This sequence belongs to the TRAFAC class myosin-kinesin ATPase superfamily. Kinesin family. Kinesin II subfamily. Heterodimer of KIF3A and KIF3C.

The protein localises to the cytoplasm. The protein resides in the cytoskeleton. Microtubule-based anterograde translocator for membranous organelles. This is Kinesin-like protein KIF3C (KIF3C) from Pongo abelii (Sumatran orangutan).